The chain runs to 116 residues: Large ribosomal subunit protein bL17 (116 aa).

It belongs to the bacterial ribosomal protein bL17 family. As to quaternary structure, part of the 50S ribosomal subunit. Contacts protein L32.

In Prochlorococcus marinus (strain MIT 9312), this protein is Large ribosomal subunit protein bL17.